Reading from the N-terminus, the 391-residue chain is Decapping nuclease RAI1 (391 aa).

E174 contacts a divalent metal cation. E223 contributes to the substrate binding site. D225, E244, and L245 together coordinate a divalent metal cation. Substrate contacts are provided by K246 and Q270.

Belongs to the DXO/Dom3Z family. As to quaternary structure, interacts with RAT1; the interaction is direct, stabilizes RAT1 protein structure and stimulates its exoribonuclease activity. The interaction also stimulates RAI1 pyrophosphohydrolase activity, probably by recruiting it to mRNA substrates. A divalent metal cation is required as a cofactor.

It is found in the nucleus. It catalyses the reaction a 5'-end NAD(+)-phospho-ribonucleoside in mRNA + H2O = a 5'-end phospho-ribonucleoside in mRNA + NAD(+) + H(+). It carries out the reaction a 5'-end (N(7)-methyl 5'-triphosphoguanosine)-ribonucleoside-ribonucleotide in mRNA + H2O = a (N(7)-methyl 5'-triphosphoguanosine)-nucleoside + a 5'-end phospho-ribonucleoside in mRNA + H(+). The enzyme catalyses a 5'-end triphospho-ribonucleoside in mRNA + H2O = a 5'-end phospho-ribonucleoside in mRNA + diphosphate + H(+). Its function is as follows. Decapping enzyme for NAD-capped RNAs: specifically hydrolyzes the nicotinamide adenine dinucleotide (NAD) cap from a subset of RNAs by removing the entire NAD moiety from the 5'-end of an NAD-capped RNA. The NAD-cap is present at the 5'-end of some RNAs and snoRNAs. In contrast to the canonical 5'-end N7 methylguanosine (m7G) cap, the NAD cap promotes mRNA decay. Also acts as a non-canonical decapping enzyme that removes the entire cap structure of m7G capped or incompletely capped RNAs. Has decapping activity toward incomplete 5'-end m7G cap mRNAs such as unmethylated 5'-end-capped RNA (cap0), while it has no activity toward 2'-O-ribose methylated m7G cap (cap1). Also possesses RNA 5'-pyrophosphohydrolase activity by hydrolyzing the 5'-end triphosphate to release pyrophosphates. Stimulates exoribonuclease activity of Rat1, allowing it to degrade RNAs with stable secondary structure more effectively. This chain is Decapping nuclease RAI1, found in Candida albicans (strain SC5314 / ATCC MYA-2876) (Yeast).